Reading from the N-terminus, the 733-residue chain is Tudor domain-containing protein 3 (733 aa).

The disordered stretch occupies residues 241–281 (TRTFGGGGNAGGNLANPGSSYKSRDTYQRKREEREKPWTEN). Residues 262–281 (KSRDTYQRKREEREKPWTEN) show a composition bias toward basic and acidic residues. The UBA domain maps to 290–330 (LVDERALRDIMEMGFNREAARQALLDNNNNLEVALNLLLTR). The interval 333 to 630 (QPRAAPVEQS…RSGPIKGPRD (298 aa)) is disordered. Positions 346–355 (PRGKGRGKGR) are enriched in basic residues. Residues 392–408 (PSQQDHQTKMNFSNSDQ) show a composition bias toward polar residues. Over residues 420–441 (PRNDGRSQRNDRPPRFQKDGDF) the composition is skewed to basic and acidic residues. Residues 446–455 (PASSSFSQPQ) are compositionally biased toward polar residues. Over residues 456-478 (KWRDGERTGRGGGPERWKNESQD) the composition is skewed to basic and acidic residues. Positions 484–499 (VSYSSSFSKSREQQGA) are enriched in polar residues. Positions 559–570 (HSQDALGKKDFQ) are enriched in basic and acidic residues. One can recognise a Tudor domain in the interval 639-699 (NWKAGDQCLA…KPLHMDDDED (61 aa)). Over residues 706 to 716 (LEFRRGGDGQP) the composition is skewed to basic and acidic residues. A disordered region spans residues 706–733 (LEFRRGGDGQPRRSRPTQQYYQPPRARD).

As to quaternary structure, component of mRNA stress granules.

It is found in the cytoplasm. The protein resides in the nucleus. Its function is as follows. Scaffolding protein that specifically recognizes and binds dimethylarginine-containing proteins. Plays a role in the regulation of translation of target mRNAs by binding Arg/Gly-rich motifs (GAR) in dimethylarginine-containing proteins. In nucleus, acts as a coactivator: recognizes and binds asymmetric dimethylation on the core histone tails associated with transcriptional activation (H3R17me2a and H4R3me2a) and recruits proteins at these arginine-methylated loci. In cytoplasm, acts as an antiviral factor that participates in the assembly of stress granules together with G3BP1. The protein is Tudor domain-containing protein 3 (tdrd3) of Danio rerio (Zebrafish).